A 357-amino-acid polypeptide reads, in one-letter code: Protein RecA (357 aa).

71–78 contacts ATP; that stretch reads GPESSGKT.

Belongs to the RecA family.

Its subcellular location is the cytoplasm. Can catalyze the hydrolysis of ATP in the presence of single-stranded DNA, the ATP-dependent uptake of single-stranded DNA by duplex DNA, and the ATP-dependent hybridization of homologous single-stranded DNAs. It interacts with LexA causing its activation and leading to its autocatalytic cleavage. The sequence is that of Protein RecA from Ehrlichia canis (strain Jake).